A 417-amino-acid polypeptide reads, in one-letter code: Brevican core protein (417 aa).

Positions 1–22 (MAPLFLPLLIALALAPGPTASA) are cleaved as a signal peptide. Residues 23–155 (DVLEGDSSED…SSDAVEVKVK (133 aa)) enclose the Ig-like V-type domain. Disulfide bonds link Cys57-Cys137, Cys179-Cys250, and Cys203-Cys224. N-linked (GlcNAc...) asparagine glycosylation occurs at Asn130. Link domains follow at residues 157–252 (VVFL…YCYA) and 257–354 (GELF…YCFR). Residue Asn267 is glycosylated (N-linked (GlcNAc...) asparagine). 2 disulfides stabilise this stretch: Cys277-Cys352 and Cys301-Cys322. Residue Asn337 is glycosylated (N-linked (GlcNAc...) asparagine).

The protein belongs to the aggrecan/versican proteoglycan family. As to expression, central nervous system.

It is found in the secreted. The protein localises to the extracellular space. It localises to the extracellular matrix. Functionally, may play a role in the terminally differentiating and the adult nervous system during postnatal development. Could stabilize interactions between hyaluronan (HA) and brain proteoglycans. The polypeptide is Brevican core protein (BCAN) (Felis catus (Cat)).